Consider the following 372-residue polypeptide: Alpha-1,3-mannosyl-glycoprotein 4-beta-N-acetylglucosaminyltransferase-like protein MGAT4D (372 aa).

Over 1 to 8 the chain is Cytoplasmic; it reads MKTKNVNL. The chain crosses the membrane as a helical; Signal-anchor for type II membrane protein span at residues 9-29; it reads LFALVAVLLFGFSCFCISRMN. Topologically, residues 30–372 are lumenal; the sequence is QTNNQLINCR…REQHLKDHYY (343 aa). N-linked (GlcNAc...) asparagine glycans are attached at residues asparagine 54 and asparagine 143.

The protein belongs to the glycosyltransferase 54 family. As to quaternary structure, may self-associate; specifically in the endoplasmic reticulum prior to its translocation to the Golgi. Interacts with MGAT1, MGAT3 and MAN2A2; may interact with MGTA1 specifically in the Golgi. In terms of processing, N-glycosylated. O-glycosylated; further modified with terminal sialic acid residues. Testis.

The protein localises to the golgi apparatus membrane. It localises to the endoplasmic reticulum membrane. Its function is as follows. May play a role in male spermatogenesis. In vitro acts as inhibitor of MGAT1 activity causing cell surface proteins to carry mainly high mannose N-glycans. The function is mediated by its lumenal domain and occurs specifically in the Golgi. A catalytic glucosyltransferase activity is not detected. May be involved in regulation of Sertoli-germ cell interactions during specific stages of spermatogenesis. In Rattus norvegicus (Rat), this protein is Alpha-1,3-mannosyl-glycoprotein 4-beta-N-acetylglucosaminyltransferase-like protein MGAT4D.